Here is a 414-residue protein sequence, read N- to C-terminus: Serine hydroxymethyltransferase (414 aa).

Residues Leu-116 and 120–122 (GHL) contribute to the (6S)-5,6,7,8-tetrahydrofolate site. N6-(pyridoxal phosphate)lysine is present on Lys-224. Residues Glu-240 and 348 to 350 (SPF) each bind (6S)-5,6,7,8-tetrahydrofolate.

Belongs to the SHMT family. Homodimer. It depends on pyridoxal 5'-phosphate as a cofactor.

It localises to the cytoplasm. It catalyses the reaction (6R)-5,10-methylene-5,6,7,8-tetrahydrofolate + glycine + H2O = (6S)-5,6,7,8-tetrahydrofolate + L-serine. Its pathway is one-carbon metabolism; tetrahydrofolate interconversion. It functions in the pathway amino-acid biosynthesis; glycine biosynthesis; glycine from L-serine: step 1/1. Its function is as follows. Catalyzes the reversible interconversion of serine and glycine with tetrahydrofolate (THF) serving as the one-carbon carrier. This reaction serves as the major source of one-carbon groups required for the biosynthesis of purines, thymidylate, methionine, and other important biomolecules. Also exhibits THF-independent aldolase activity toward beta-hydroxyamino acids, producing glycine and aldehydes, via a retro-aldol mechanism. This is Serine hydroxymethyltransferase from Campylobacter concisus (strain 13826).